The following is a 130-amino-acid chain: Small ribosomal subunit protein uS8 (130 aa).

The protein belongs to the universal ribosomal protein uS8 family. As to quaternary structure, part of the 30S ribosomal subunit.

Functionally, one of the primary rRNA binding proteins, it binds directly to 16S rRNA central domain where it helps coordinate assembly of the platform of the 30S subunit. This is Small ribosomal subunit protein uS8 from Pyrobaculum arsenaticum (strain DSM 13514 / JCM 11321 / PZ6).